The chain runs to 524 residues: D-3-phosphoglycerate dehydrogenase (524 aa).

Residues 149 to 150 (RI), D169, 229 to 231 (CAR), and D255 each bind NAD(+). Residue R231 is part of the active site. E260 is a catalytic residue. Catalysis depends on H278, which acts as the Proton donor. An NAD(+)-binding site is contributed by 278–281 (HQGA). In terms of domain architecture, ACT spans 452 to 524 (LAIIKHIDRP…NIKDVAVINL (73 aa)).

It belongs to the D-isomer specific 2-hydroxyacid dehydrogenase family.

It carries out the reaction (2R)-3-phosphoglycerate + NAD(+) = 3-phosphooxypyruvate + NADH + H(+). Its pathway is amino-acid biosynthesis; L-serine biosynthesis; L-serine from 3-phospho-D-glycerate: step 1/3. This chain is D-3-phosphoglycerate dehydrogenase (serA), found in Methanocaldococcus jannaschii (strain ATCC 43067 / DSM 2661 / JAL-1 / JCM 10045 / NBRC 100440) (Methanococcus jannaschii).